The sequence spans 392 residues: BURP domain protein RD22 (392 aa).

The first 22 residues, methionine 1–aspartate 22, serve as a signal peptide directing secretion. TXV repeat units lie at residues threonine 56–valine 58, threonine 78–valine 80, threonine 100–valine 102, and threonine 125–valine 127. The interval asparagine 57–glutamate 164 is 5 X approximate repeats. The segment at glycine 61–valine 136 is disordered. A compositionally biased stretch (gly residues) spans glycine 94 to valine 114. The BURP domain occupies phenylalanine 176–tyrosine 392.

As to expression, expressed in seed. Highest expression in leaves and guard cells.

Acts to suppress chlorophyll degradation under moisture stress. In Arabidopsis thaliana (Mouse-ear cress), this protein is BURP domain protein RD22.